We begin with the raw amino-acid sequence, 338 residues long: Acyl-CoA:acyl-CoA alkyltransferase (338 aa).

Mn(2+) is bound by residues H18 and D56. The active-site Proton acceptor is E97. C123 functions as the Acyl-thioester intermediate in the catalytic mechanism.

This sequence belongs to the thiolase-like superfamily. OleA family. As to quaternary structure, homodimer. Weakly associates with the OleBCD complex.

Its subcellular location is the cytoplasm. The catalysed reaction is a 1,2-saturated acyl-CoA + an acyl-CoA + H2O = an (R)-2-alkyl-3-oxoalkanoate + 2 CoA + H(+). Inhibited by cerulenin. Its function is as follows. Involved in olefin biosynthesis. Catalyzes a non-decarboxylative head-to-head Claisen condensation of two acyl-CoA molecules, generating an (R)-2-alkyl-3-oxoalkanoate. Is active with fatty acyl-CoA substrates that ranged from C(8) to C(16) in length, and is the most active with palmitoyl-CoA and myristoyl-CoA. The chain is Acyl-CoA:acyl-CoA alkyltransferase from Xanthomonas campestris pv. campestris (strain ATCC 33913 / DSM 3586 / NCPPB 528 / LMG 568 / P 25).